An 85-amino-acid polypeptide reads, in one-letter code: ATP synthase subunit c (85 aa).

Transmembrane regions (helical) follow at residues 10–30 and 53–73; these read IAVS…FGIL and FIVA…ALLF.

The protein belongs to the ATPase C chain family. F-type ATPases have 2 components, F(1) - the catalytic core - and F(0) - the membrane proton channel. F(1) has five subunits: alpha(3), beta(3), gamma(1), delta(1), epsilon(1). F(0) has three main subunits: a(1), b(2) and c(10-14). The alpha and beta chains form an alternating ring which encloses part of the gamma chain. F(1) is attached to F(0) by a central stalk formed by the gamma and epsilon chains, while a peripheral stalk is formed by the delta and b chains.

The protein localises to the cell inner membrane. F(1)F(0) ATP synthase produces ATP from ADP in the presence of a proton or sodium gradient. F-type ATPases consist of two structural domains, F(1) containing the extramembraneous catalytic core and F(0) containing the membrane proton channel, linked together by a central stalk and a peripheral stalk. During catalysis, ATP synthesis in the catalytic domain of F(1) is coupled via a rotary mechanism of the central stalk subunits to proton translocation. Functionally, key component of the F(0) channel; it plays a direct role in translocation across the membrane. A homomeric c-ring of between 10-14 subunits forms the central stalk rotor element with the F(1) delta and epsilon subunits. This is ATP synthase subunit c from Idiomarina loihiensis (strain ATCC BAA-735 / DSM 15497 / L2-TR).